The primary structure comprises 139 residues: Large ribosomal subunit protein uL16 (139 aa).

The span at 1-17 (MLQPKRTKYRKQQKGRM) shows a compositional bias: basic residues. The tract at residues 1–25 (MLQPKRTKYRKQQKGRMKGLSQRGH) is disordered.

The protein belongs to the universal ribosomal protein uL16 family. As to quaternary structure, part of the 50S ribosomal subunit.

In terms of biological role, binds 23S rRNA and is also seen to make contacts with the A and possibly P site tRNAs. The protein is Large ribosomal subunit protein uL16 of Christiangramia forsetii (strain DSM 17595 / CGMCC 1.15422 / KT0803) (Gramella forsetii).